Consider the following 173-residue polypeptide: NADH-ubiquinone oxidoreductase chain 6 (173 aa).

5 consecutive transmembrane segments (helical) span residues 1–21 (MTYF…AVAS), 27–47 (YGVL…LSLG), 48–68 (VSFI…VVFV), 87–107 (VVIY…VGDF), and 139–159 (WGAG…FVVL).

Belongs to the complex I subunit 6 family.

The protein resides in the mitochondrion membrane. The catalysed reaction is a ubiquinone + NADH + 5 H(+)(in) = a ubiquinol + NAD(+) + 4 H(+)(out). Functionally, core subunit of the mitochondrial membrane respiratory chain NADH dehydrogenase (Complex I) that is believed to belong to the minimal assembly required for catalysis. Complex I functions in the transfer of electrons from NADH to the respiratory chain. The immediate electron acceptor for the enzyme is believed to be ubiquinone. In Struthio camelus (Common ostrich), this protein is NADH-ubiquinone oxidoreductase chain 6 (MT-ND6).